A 175-amino-acid chain; its full sequence is Alkyl hydroperoxide reductase AhpD (175 aa).

The active-site Proton donor is Cys131. A disulfide bond links Cys131 and Cys134. Cys134 functions as the Cysteine sulfenic acid (-SOH) intermediate in the catalytic mechanism.

It belongs to the AhpD family.

The catalysed reaction is N(6)-[(R)-dihydrolipoyl]-L-lysyl-[lipoyl-carrier protein] + a hydroperoxide = N(6)-[(R)-lipoyl]-L-lysyl-[lipoyl-carrier protein] + an alcohol + H2O. In terms of biological role, antioxidant protein with alkyl hydroperoxidase activity. Required for the reduction of the AhpC active site cysteine residues and for the regeneration of the AhpC enzyme activity. This chain is Alkyl hydroperoxide reductase AhpD, found in Brucella canis (strain ATCC 23365 / NCTC 10854 / RM-666).